The following is a 113-amino-acid chain: Cell cycle protein GpsB (113 aa).

The stretch at 36 to 65 (IKDYETYAALVKSLRQEIADLKEELARKPQ) forms a coiled coil. Positions 61-82 (ARKPQVSSAPSPSHPDPIDVAA) are disordered.

This sequence belongs to the GpsB family. As to quaternary structure, forms polymers through the coiled coil domains. Interacts with PBP1, MreC and EzrA.

The protein resides in the cytoplasm. Its function is as follows. Divisome component that associates with the complex late in its assembly, after the Z-ring is formed, and is dependent on DivIC and PBP2B for its recruitment to the divisome. Together with EzrA, is a key component of the system that regulates PBP1 localization during cell cycle progression. Its main role could be the removal of PBP1 from the cell pole after pole maturation is completed. Also contributes to the recruitment of PBP1 to the division complex. Not essential for septum formation. This chain is Cell cycle protein GpsB, found in Streptococcus pneumoniae (strain Hungary19A-6).